The chain runs to 612 residues: Peroxisomal carnitine O-octanoyltransferase (612 aa).

The residue at position 1 (methionine 1) is an N-acetylmethionine. 2 positions are modified to N6-succinyllysine: lysine 40 and lysine 57. The Proton acceptor role is filled by histidine 327. Residues lysine 406 and 410-417 (KEEALHPD) each bind CoA. Lysine 406 is modified (N6-acetyllysine; alternate). An N6-succinyllysine; alternate modification is found at lysine 406. (R)-carnitine contacts are provided by tyrosine 439, threonine 441, and threonine 452. Positions 610–612 (AHL) match the Microbody targeting signal motif.

The protein belongs to the carnitine/choline acetyltransferase family.

It is found in the peroxisome. The enzyme catalyses octanoyl-CoA + (R)-carnitine = O-octanoyl-(R)-carnitine + CoA. It carries out the reaction 4,8-dimethylnonanoyl-CoA + (R)-carnitine = O-4,8-dimethylnonanoyl-(R)-carnitine + CoA. Its pathway is lipid metabolism; fatty acid beta-oxidation. Its function is as follows. Beta-oxidation of fatty acids. The highest activity concerns the C6 to C10 chain length substrate. The sequence is that of Peroxisomal carnitine O-octanoyltransferase (Crot) from Mus musculus (Mouse).